A 245-amino-acid chain; its full sequence is Adenylate kinase (245 aa).

15-20 contacts ATP; that stretch reads GSGKGT. Positions 35–64 are NMP; sequence SSGDLLRGAVSKDTPLSQEIKSYLDQGKLL. Residues Ser-36, Arg-41, 62 to 64, 103 to 106, and Gln-110 contribute to the AMP site; these read KLL and GFPR. Residues 143 to 176 form an LID region; the sequence is SRYICPACQGIYNEQQGFSSCPKCSVELIRRSDD. Arg-144 contacts ATP. 2 residues coordinate Zn(2+): Cys-147 and Cys-150. Residue 153-154 participates in ATP binding; that stretch reads IY. Residues Cys-163 and Cys-166 each contribute to the Zn(2+) site. Residues Arg-173 and Arg-184 each contribute to the AMP site. Ala-212 contributes to the ATP binding site.

Belongs to the adenylate kinase family. Monomer.

The protein resides in the cytoplasm. It carries out the reaction AMP + ATP = 2 ADP. The protein operates within purine metabolism; AMP biosynthesis via salvage pathway; AMP from ADP: step 1/1. Catalyzes the reversible transfer of the terminal phosphate group between ATP and AMP. Plays an important role in cellular energy homeostasis and in adenine nucleotide metabolism. This chain is Adenylate kinase, found in Chlamydia trachomatis serovar L2 (strain ATCC VR-902B / DSM 19102 / 434/Bu).